The primary structure comprises 209 residues: Outer-membrane lipoprotein carrier protein (209 aa).

The N-terminal stretch at 1 to 21 (MHRQLRYAVLATALFASTAFA) is a signal peptide.

It belongs to the LolA family. As to quaternary structure, monomer.

Its subcellular location is the periplasm. Functionally, participates in the translocation of lipoproteins from the inner membrane to the outer membrane. Only forms a complex with a lipoprotein if the residue after the N-terminal Cys is not an aspartate (The Asp acts as a targeting signal to indicate that the lipoprotein should stay in the inner membrane). This Xanthomonas axonopodis pv. citri (strain 306) protein is Outer-membrane lipoprotein carrier protein.